The following is a 147-amino-acid chain: Large ribosomal subunit protein uL13 (147 aa).

This sequence belongs to the universal ribosomal protein uL13 family. Part of the 50S ribosomal subunit.

Functionally, this protein is one of the early assembly proteins of the 50S ribosomal subunit, although it is not seen to bind rRNA by itself. It is important during the early stages of 50S assembly. The chain is Large ribosomal subunit protein uL13 from Pseudothermotoga lettingae (strain ATCC BAA-301 / DSM 14385 / NBRC 107922 / TMO) (Thermotoga lettingae).